A 693-amino-acid polypeptide reads, in one-letter code: Methionine--tRNA ligase (693 aa).

Residues 12-22 (PYANGPLHLGH) carry the 'HIGH' region motif. The Zn(2+) site is built by cysteine 143, cysteine 146, cysteine 156, and cysteine 159. A 'KMSKS' region motif is present at residues 330-334 (KMSKS). An ATP-binding site is contributed by lysine 333. The interval 557–576 (APTAKNEAAKPAAPAAAKTE) is disordered. The region spanning 590–693 (DFAKLDLRIG…SGAQPGMPVR (104 aa)) is the tRNA-binding domain.

Belongs to the class-I aminoacyl-tRNA synthetase family. MetG type 1 subfamily. As to quaternary structure, homodimer. Zn(2+) serves as cofactor.

Its subcellular location is the cytoplasm. It carries out the reaction tRNA(Met) + L-methionine + ATP = L-methionyl-tRNA(Met) + AMP + diphosphate. Functionally, is required not only for elongation of protein synthesis but also for the initiation of all mRNA translation through initiator tRNA(fMet) aminoacylation. In Stenotrophomonas maltophilia (strain R551-3), this protein is Methionine--tRNA ligase.